Reading from the N-terminus, the 365-residue chain is Chorismate synthase (365 aa).

R46 contacts NADP(+). Residues 124-126, G284, 299-303, and R326 each bind FMN; these read RAS and KPTPS.

It belongs to the chorismate synthase family. It depends on FMNH2 as a cofactor.

The catalysed reaction is 5-O-(1-carboxyvinyl)-3-phosphoshikimate = chorismate + phosphate. The protein operates within metabolic intermediate biosynthesis; chorismate biosynthesis; chorismate from D-erythrose 4-phosphate and phosphoenolpyruvate: step 7/7. In terms of biological role, catalyzes the anti-1,4-elimination of the C-3 phosphate and the C-6 proR hydrogen from 5-enolpyruvylshikimate-3-phosphate (EPSP) to yield chorismate, which is the branch point compound that serves as the starting substrate for the three terminal pathways of aromatic amino acid biosynthesis. This reaction introduces a second double bond into the aromatic ring system. This Pyrobaculum islandicum (strain DSM 4184 / JCM 9189 / GEO3) protein is Chorismate synthase.